The primary structure comprises 57 residues: U13-myrmicitoxin-Mri1a (57 aa).

A signal peptide spans 1–23 (MKIIHVLLLVAVVAITMSPSIMA). Positions 24-29 (ESVAEA) are excised as a propeptide. Glu56 bears the Glutamic acid 1-amide mark.

As to expression, expressed by the venom gland.

The protein localises to the secreted. Functionally, induces paralysis 1 hour after injection into insects (blowfly L.caesar) but does not appear to be lethal. The sequence is that of U13-myrmicitoxin-Mri1a from Manica rubida (European giant red ant).